We begin with the raw amino-acid sequence, 142 residues long: Putative pre-16S rRNA nuclease (142 aa).

Belongs to the YqgF nuclease family.

The protein resides in the cytoplasm. Functionally, could be a nuclease involved in processing of the 5'-end of pre-16S rRNA. In Chloroflexus aggregans (strain MD-66 / DSM 9485), this protein is Putative pre-16S rRNA nuclease.